Consider the following 640-residue polypeptide: Threonine--tRNA ligase (640 aa).

Residues 1-61 enclose the TGS domain; the sequence is MPIITLPNGD…TEDSTLQIIT (61 aa). The catalytic stretch occupies residues 242-533; the sequence is DHRKIGKALD…LIEHYAGFMP (292 aa). Zn(2+)-binding residues include Cys333, His384, and His510.

The protein belongs to the class-II aminoacyl-tRNA synthetase family. In terms of assembly, homodimer. Zn(2+) serves as cofactor.

Its subcellular location is the cytoplasm. It carries out the reaction tRNA(Thr) + L-threonine + ATP = L-threonyl-tRNA(Thr) + AMP + diphosphate + H(+). Its function is as follows. Catalyzes the attachment of threonine to tRNA(Thr) in a two-step reaction: L-threonine is first activated by ATP to form Thr-AMP and then transferred to the acceptor end of tRNA(Thr). Also edits incorrectly charged L-seryl-tRNA(Thr). The polypeptide is Threonine--tRNA ligase (Acinetobacter baumannii (strain SDF)).